The primary structure comprises 383 residues: ATP phosphoribosyltransferase regulatory subunit (383 aa).

The protein belongs to the class-II aminoacyl-tRNA synthetase family. HisZ subfamily. As to quaternary structure, heteromultimer composed of HisG and HisZ subunits.

The protein localises to the cytoplasm. Its pathway is amino-acid biosynthesis; L-histidine biosynthesis; L-histidine from 5-phospho-alpha-D-ribose 1-diphosphate: step 1/9. Its function is as follows. Required for the first step of histidine biosynthesis. May allow the feedback regulation of ATP phosphoribosyltransferase activity by histidine. This is ATP phosphoribosyltransferase regulatory subunit from Janthinobacterium sp. (strain Marseille) (Minibacterium massiliensis).